The following is a 502-amino-acid chain: Hexokinase-9 (502 aa).

The helical transmembrane segment at 5–24 (AALASAAMAAAAVAVVSTVL) threads the bilayer. The Hexokinase domain maps to 37 to 488 (RAEAVLLRDL…SGVGAALLAA (452 aa)). The interval 92-230 (SGGEKGMFYA…GLDMKVTALV (139 aa)) is hexokinase small subdomain. ADP is bound by residues G106, T107, and N108. The D-glucose site is built by T196, K197, N231, and D232. A hexokinase large subdomain region spans residues 231–477 (NDTVGTLAAG…PSVMIKHVND (247 aa)). T255 serves as a coordination point for ADP. Residues N258, E286, and E317 each coordinate D-glucose. Residue G442 coordinates ADP.

Belongs to the hexokinase family. As to expression, expressed in roots, leaves, flowers, immature seeds, endosperm and seed coat.

Its subcellular location is the plastid. It is found in the chloroplast outer membrane. The catalysed reaction is a D-hexose + ATP = a D-hexose 6-phosphate + ADP + H(+). It carries out the reaction D-fructose + ATP = D-fructose 6-phosphate + ADP + H(+). The enzyme catalyses D-glucose + ATP = D-glucose 6-phosphate + ADP + H(+). It participates in carbohydrate metabolism; hexose metabolism. The protein operates within carbohydrate degradation; glycolysis; D-glyceraldehyde 3-phosphate and glycerone phosphate from D-glucose: step 1/4. Its function is as follows. Fructose and glucose phosphorylating enzyme. The protein is Hexokinase-9 (HXK9) of Oryza sativa subsp. japonica (Rice).